A 293-amino-acid chain; its full sequence is NAD kinase (293 aa).

Aspartate 73 functions as the Proton acceptor in the catalytic mechanism. NAD(+)-binding positions include 73 to 74 (DG), 147 to 148 (NE), histidine 158, arginine 175, aspartate 177, 188 to 193 (TAYSLS), and glutamine 248.

It belongs to the NAD kinase family. It depends on a divalent metal cation as a cofactor.

The protein localises to the cytoplasm. It catalyses the reaction NAD(+) + ATP = ADP + NADP(+) + H(+). Its function is as follows. Involved in the regulation of the intracellular balance of NAD and NADP, and is a key enzyme in the biosynthesis of NADP. Catalyzes specifically the phosphorylation on 2'-hydroxyl of the adenosine moiety of NAD to yield NADP. In Photobacterium profundum (strain SS9), this protein is NAD kinase.